A 65-amino-acid chain; its full sequence is Subtilisin inhibitor CLSI-I (65 aa).

Belongs to the protease inhibitor I13 (potato type I serine protease inhibitor) family.

Its function is as follows. Inhibits subtilisin-type microbial serine proteases including proteinase K, subtilisin BPN', subtilisin Carlsberg, subtilisin E, A.oryzae protease and S.griseus alkaline protease. Weakly inhibits pronase E. Does not inhibit trypsin or chymotrypsin. The protein is Subtilisin inhibitor CLSI-I of Canavalia lineata (Beach bean).